The chain runs to 2194 residues: Nucleosome-remodeling factor subunit NURF301-like (2194 aa).

Positions 1–12 (MAPPRGRSKRKH) are enriched in basic residues. The tract at residues 1–137 (MAPPRGRSKR…EEEESSDDEF (137 aa)) is disordered. Positions 60-79 (AQRETPSDAEEVEVKIEEIS) are enriched in basic and acidic residues. Positions 80–93 (VRSTPASTPAPKST) are enriched in polar residues. Basic residues predominate over residues 94 to 112 (SKARGRPKKNPTPPRRKSL). Positions 118–137 (DIIYMDEDSEEEEESSDDEF) are enriched in acidic residues. DDT domains are found at residues 196–256 (TASI…SDDE) and 341–396 (VGKF…SAVR). The PHD-type 1 zinc finger occupies 347 to 392 (DENCRVCGKSSGRVVGCTQCEAAFHVECSHLKPFPEVLVCNICKKN). Disordered stretches follow at residues 1091-1122 (ESWL…SLDN), 1158-1255 (AKRK…PQPN), 1413-1433 (TSNF…PVYS), 1657-1701 (MRQE…SNDS), and 1834-1888 (ESIA…HTPG). A coiled-coil region spans residues 1151 to 1187 (RAEAEKTAKRKLEATRKAQKAKEDEERRRIQQQQQRS). The span at 1158–1179 (AKRKLEATRKAQKAKEDEERRR) shows a compositional bias: basic and acidic residues. Positions 1665-1684 (TSGYDSSGNPIRSITSSGDT) are enriched in polar residues. Residues 1852 to 1861 (KSEDDRDKPE) are compositionally biased toward basic and acidic residues. 2 consecutive DDT domains span residues 1883 to 1953 (AFHT…EQER) and 1948 to 2014 (IEEQ…AEGY). 2 consecutive PHD-type zinc fingers follow at residues 1899–1950 (IEHC…CIEE) and 1959–2010 (ALYC…CTRE). The Bromo domain maps to 2030-2134 (QLTRADYTHV…EVFDKKLIDV (105 aa)).

It belongs to the BPTF family. As to quaternary structure, part of a nucleosome remodeling factor-like (NURF-like) complex containing nurf-1 and isw-1.

The protein localises to the nucleus. Functionally, histone-binding component of a NURF-like (nucleosome remodeling factor-like) complex, which would catalyze ATP-dependent nucleosome sliding and facilitate transcription of chromatin. Involved in vulval cell fates. This chain is Nucleosome-remodeling factor subunit NURF301-like (nurf-1), found in Caenorhabditis elegans.